The following is a 292-amino-acid chain: 5,10-methylenetetrahydrofolate reductase (292 aa).

Catalysis depends on glutamate 28, which acts as the Proton donor/acceptor. An NADH-binding site is contributed by threonine 59. FAD-binding residues include tyrosine 60, alanine 62, histidine 88, arginine 118, glycine 119, aspartate 120, alanine 132, tyrosine 152, histidine 156, aspartate 165, asparagine 168, lysine 171, and lysine 172. Position 120 (aspartate 120) interacts with (6S)-5-methyl-5,6,7,8-tetrahydrofolate. Position 183 (glutamine 183) interacts with NADH. Glutamine 183 is a binding site for (6S)-5-methyl-5,6,7,8-tetrahydrofolate.

It belongs to the methylenetetrahydrofolate reductase family. The cofactor is FAD.

The catalysed reaction is (6S)-5-methyl-5,6,7,8-tetrahydrofolate + NAD(+) = (6R)-5,10-methylene-5,6,7,8-tetrahydrofolate + NADH + H(+). It participates in one-carbon metabolism; tetrahydrofolate interconversion. The protein operates within amino-acid biosynthesis; L-methionine biosynthesis via de novo pathway. In terms of biological role, catalyzes the NADH-dependent reduction of 5,10-methylenetetrahydrofolate to 5-methyltetrahydrofolate. Is required to provide the methyl group necessary for methionine synthetase to convert homocysteine to methionine; the methyl group is given by 5-methyltetrahydrofolate. The chain is 5,10-methylenetetrahydrofolate reductase (metF) from Buchnera aphidicola subsp. Acyrthosiphon pisum (strain APS) (Acyrthosiphon pisum symbiotic bacterium).